The chain runs to 204 residues: Inner membrane-spanning protein YciB (204 aa).

5 consecutive transmembrane segments (helical) span residues 48-68, 73-93, 102-122, 147-167, and 170-190; these read ILFA…LYFF, FESM…ATLM, WKPT…QLFT, GAWI…AYAF, and AVWV…FVVG.

It belongs to the YciB family.

The protein resides in the cell inner membrane. In terms of biological role, plays a role in cell envelope biogenesis, maintenance of cell envelope integrity and membrane homeostasis. The sequence is that of Inner membrane-spanning protein YciB from Nitrosococcus oceani (strain ATCC 19707 / BCRC 17464 / JCM 30415 / NCIMB 11848 / C-107).